Consider the following 122-residue polypeptide: Probable DNA-directed RNA polymerase II subunit RPB11 (122 aa).

It belongs to the archaeal Rpo11/eukaryotic RPB11/RPC19 RNA polymerase subunit family. As to quaternary structure, component of the RNA polymerase II (Pol II) complex consisting of 12 subunits.

It localises to the nucleus. Functionally, DNA-dependent RNA polymerase catalyzes the transcription of DNA into RNA using the four ribonucleoside triphosphates as substrates. Component of RNA polymerase II which synthesizes mRNA precursors and many functional non-coding RNAs. Pol II is the central component of the basal RNA polymerase II transcription machinery. It is composed of mobile elements that move relative to each other. RPB11 is part of the core element with the central large cleft. The sequence is that of Probable DNA-directed RNA polymerase II subunit RPB11 (rpb-11) from Caenorhabditis briggsae.